The sequence spans 223 residues: MRLRNKPWVKEYLEKNDKYLISWDKETKINLSDLFNNKKQPVHLEIGCGKGNFITNHALKESDINFIGMEKEETVVGVALKKTLAEFEQRNKEVTNLKYFNDFAEDLSDIFAPSSIDKIYLNFSDPWPKARHSKKRLTYRTFLDIYANIIKSHGILEFKTDNDGLFAFSLEEIAENKNWELIYQTTDLYSDIEALKNNIPTEYETKFHTAGKNINKLIIKKTF.

Residues E45, E70, and D125 each contribute to the S-adenosyl-L-methionine site. D125 is an active-site residue. Substrate contacts are provided by residues K129, D161, and 201-204 (TEYE).

This sequence belongs to the class I-like SAM-binding methyltransferase superfamily. TrmB family.

It carries out the reaction guanosine(46) in tRNA + S-adenosyl-L-methionine = N(7)-methylguanosine(46) in tRNA + S-adenosyl-L-homocysteine. The protein operates within tRNA modification; N(7)-methylguanine-tRNA biosynthesis. Functionally, catalyzes the formation of N(7)-methylguanine at position 46 (m7G46) in tRNA. This is tRNA (guanine-N(7)-)-methyltransferase from Mesoplasma florum (strain ATCC 33453 / NBRC 100688 / NCTC 11704 / L1) (Acholeplasma florum).